Consider the following 794-residue polypeptide: Cadherin-12 (794 aa).

A signal peptide spans 1–23; the sequence is MLTRNCLSLLLWVLFDGGLLTPL. A propeptide spanning residues 24-54 is cleaved from the precursor; the sequence is QPQPQQTLATEPRENVIHLPGQRSHFQRVKR. 5 consecutive Cadherin domains span residues 55–160, 161–269, 270–384, 385–487, and 488–609; these read GWVW…EPKF, LDGP…PPRF, PKSI…PPVF, SKPL…EFPP, and EISV…IFLP. At 55–609 the chain is on the extracellular side; it reads GWVWNQFFVL…SCNVEAIFLP (555 aa). N256 carries an N-linked (GlcNAc...) asparagine glycan. N-linked (GlcNAc...) asparagine glycosylation is found at N456, N537, and N545. The helical transmembrane segment at 610–637 threads the bilayer; the sequence is VGLSTGALIAILLCIVILLAIVVLYVAL. Residues 638–794 lie on the Cytoplasmic side of the membrane; sequence RRQKKKDTLM…EESYNPDKVT (157 aa). Phosphoserine is present on S787.

In terms of tissue distribution, brain.

Its subcellular location is the cell membrane. Cadherins are calcium-dependent cell adhesion proteins. They preferentially interact with themselves in a homophilic manner in connecting cells; cadherins may thus contribute to the sorting of heterogeneous cell types. This Homo sapiens (Human) protein is Cadherin-12 (CDH12).